A 337-amino-acid polypeptide reads, in one-letter code: Glyceraldehyde-3-phosphate dehydrogenase (337 aa).

Residues 12-13 (RI), aspartate 34, arginine 78, and threonine 121 contribute to the NAD(+) site. Residues 151–153 (SCT), threonine 182, arginine 199, 212–213 (SG), and arginine 235 each bind D-glyceraldehyde 3-phosphate. The active-site Nucleophile is cysteine 152. Asparagine 317 contributes to the NAD(+) binding site.

It belongs to the glyceraldehyde-3-phosphate dehydrogenase family. Homotetramer.

It is found in the cytoplasm. It carries out the reaction D-glyceraldehyde 3-phosphate + phosphate + NAD(+) = (2R)-3-phospho-glyceroyl phosphate + NADH + H(+). Its pathway is carbohydrate degradation; glycolysis; pyruvate from D-glyceraldehyde 3-phosphate: step 1/5. In terms of biological role, catalyzes the oxidative phosphorylation of glyceraldehyde 3-phosphate (G3P) to 1,3-bisphosphoglycerate (BPG) using the cofactor NAD. The first reaction step involves the formation of a hemiacetal intermediate between G3P and a cysteine residue, and this hemiacetal intermediate is then oxidized to a thioester, with concomitant reduction of NAD to NADH. The reduced NADH is then exchanged with the second NAD, and the thioester is attacked by a nucleophilic inorganic phosphate to produce BPG. This is Glyceraldehyde-3-phosphate dehydrogenase (gap) from Lactococcus lactis subsp. lactis (strain IL1403) (Streptococcus lactis).